We begin with the raw amino-acid sequence, 225 residues long: Putative O-phosphotransferase MT2714 (225 aa).

Residue 30–37 participates in ATP binding; sequence GGSSAGKT.

It to S.violaceus chloramphenicol 3-O phosphotransferase.

This chain is Putative O-phosphotransferase MT2714, found in Mycobacterium tuberculosis (strain CDC 1551 / Oshkosh).